Reading from the N-terminus, the 465-residue chain is Ribulose bisphosphate carboxylase large chain (465 aa).

N6,N6,N6-trimethyllysine is present on lysine 4. Positions 113 and 163 each coordinate substrate. The active-site Proton acceptor is lysine 165. Lysine 167 serves as a coordination point for substrate. The Mg(2+) site is built by lysine 191, aspartate 193, and glutamate 194. An N6-carboxylysine modification is found at lysine 191. Histidine 284 serves as the catalytic Proton acceptor. The substrate site is built by arginine 285, histidine 317, and serine 369.

Belongs to the RuBisCO large chain family. Type I subfamily. As to quaternary structure, heterohexadecamer of 8 large chains and 8 small chains; disulfide-linked. The disulfide link is formed within the large subunit homodimers. Mg(2+) is required as a cofactor. The disulfide bond which can form in the large chain dimeric partners within the hexadecamer appears to be associated with oxidative stress and protein turnover.

The protein resides in the plastid. It is found in the chloroplast. The catalysed reaction is 2 (2R)-3-phosphoglycerate + 2 H(+) = D-ribulose 1,5-bisphosphate + CO2 + H2O. It carries out the reaction D-ribulose 1,5-bisphosphate + O2 = 2-phosphoglycolate + (2R)-3-phosphoglycerate + 2 H(+). In terms of biological role, ruBisCO catalyzes two reactions: the carboxylation of D-ribulose 1,5-bisphosphate, the primary event in carbon dioxide fixation, as well as the oxidative fragmentation of the pentose substrate in the photorespiration process. Both reactions occur simultaneously and in competition at the same active site. This is Ribulose bisphosphate carboxylase large chain from Bauera rubioides (Dog rose).